The chain runs to 309 residues: Probable RNA polymerase II nuclear localization protein SLC7A6OS (309 aa).

Disordered regions lie at residues 101-134 (GRYR…AGNS) and 233-287 (PEDI…QRMW). Residues 106–118 (LSSRRSLGTTSSG) show a composition bias toward low complexity. 2 stretches are compositionally biased toward acidic residues: residues 233–245 (PEDI…DENS) and 254–263 (PEEESSDGDE). Residues Ser302 and Ser308 each carry the phosphoserine modification.

The protein belongs to the IWR1/SLC7A6OS family.

It localises to the cytoplasm. It is found in the nucleus. Functionally, directs RNA polymerase II nuclear import. The sequence is that of Probable RNA polymerase II nuclear localization protein SLC7A6OS (SLC7A6OS) from Homo sapiens (Human).